We begin with the raw amino-acid sequence, 794 residues long: Signal transducer and activator of transcription 5A (794 aa).

Residue Tyr90 is modified to Phosphotyrosine. Phosphoserine is present on Ser129. In terms of domain architecture, SH2 spans 589–686 (WNDGAILGFV…EVFSKYYTPV (98 aa)). Position 682 is a phosphotyrosine (Tyr682). Tyr694 bears the Phosphotyrosine; by JAK2 mark. The disordered stretch occupies residues 765–794 (EELLRRPNGQSGPLSPPPAGLFTPARGSLS).

It belongs to the transcription factor STAT family. Forms a homodimer or a heterodimer with a related family member. Binds NR3C1. Interacts with NCOA1 and SOCS7. Interacts with ERBB4. Interacts with EBF4. Interacts with CD69. ISGylated. In terms of processing, tyrosine phosphorylated in response to KITLG/SCF, IL2, IL3, IL7, IL15, CSF2/GMCSF, GH1, PRL, EPO and THPO. Activated KIT promotes phosphorylation on tyrosine residues and subsequent translocation to the nucleus. Tyrosine phosphorylated in response to constitutively activated FGFR1, FGFR2, FGFR3 and FGFR4. Tyrosine phosphorylation is required for DNA-binding activity and dimerization. Serine phosphorylation is also required for maximal transcriptional activity. Tyrosine phosphorylated in response to signaling via activated FLT3; wild-type FLT3 results in much weaker phosphorylation than constitutively activated mutant FLT3. Alternatively, can be phosphorylated by JAK2 at Tyr-694. As to expression, found in mammary gland and, in lesser extent, in ovary, thymus, spleen, kidney, lung, muscle and adrenal gland.

The protein localises to the cytoplasm. The protein resides in the nucleus. Its function is as follows. Carries out a dual function: signal transduction and activation of transcription. Mediates cellular responses to the cytokine KITLG/SCF and other growth factors. May mediate cellular responses to activated FGFR1, FGFR2, FGFR3 and FGFR4. Binds to the GAS element and activates PRL-induced transcription. Regulates the expression of milk proteins during lactation. In Ovis aries (Sheep), this protein is Signal transducer and activator of transcription 5A (STAT5A).